We begin with the raw amino-acid sequence, 333 residues long: Glycerol-3-phosphate dehydrogenase [NAD(P)+] (333 aa).

NADPH contacts are provided by tryptophan 12, histidine 31, and lysine 105. Lysine 105, glycine 134, and serine 136 together coordinate sn-glycerol 3-phosphate. Alanine 138 is an NADPH binding site. Sn-glycerol 3-phosphate contacts are provided by lysine 189, aspartate 242, serine 252, arginine 253, and asparagine 254. Lysine 189 acts as the Proton acceptor in catalysis. Arginine 253 is a binding site for NADPH. NADPH is bound by residues valine 278 and glutamate 280.

Belongs to the NAD-dependent glycerol-3-phosphate dehydrogenase family.

The protein localises to the cytoplasm. It carries out the reaction sn-glycerol 3-phosphate + NAD(+) = dihydroxyacetone phosphate + NADH + H(+). The catalysed reaction is sn-glycerol 3-phosphate + NADP(+) = dihydroxyacetone phosphate + NADPH + H(+). It functions in the pathway membrane lipid metabolism; glycerophospholipid metabolism. Its function is as follows. Catalyzes the reduction of the glycolytic intermediate dihydroxyacetone phosphate (DHAP) to sn-glycerol 3-phosphate (G3P), the key precursor for phospholipid synthesis. The protein is Glycerol-3-phosphate dehydrogenase [NAD(P)+] of Brachyspira hyodysenteriae (strain ATCC 49526 / WA1).